Consider the following 254-residue polypeptide: Dihydroorotate dehydrogenase B (NAD(+)), electron transfer subunit (254 aa).

One can recognise an FAD-binding FR-type domain in the interval 1-99 (MLQTEMKVIQ…LGPLGKGFDI (99 aa)). FAD-binding positions include 50-53 (RPIS), 67-69 (LYR), and 74-75 (GT). Positions 218, 223, 226, and 241 each coordinate [2Fe-2S] cluster.

Belongs to the PyrK family. As to quaternary structure, heterotetramer of 2 PyrK and 2 PyrD type B subunits. [2Fe-2S] cluster is required as a cofactor. Requires FAD as cofactor.

The protein operates within pyrimidine metabolism; UMP biosynthesis via de novo pathway; orotate from (S)-dihydroorotate (NAD(+) route): step 1/1. Responsible for channeling the electrons from the oxidation of dihydroorotate from the FMN redox center in the PyrD type B subunit to the ultimate electron acceptor NAD(+). The chain is Dihydroorotate dehydrogenase B (NAD(+)), electron transfer subunit from Listeria monocytogenes serovar 1/2a (strain ATCC BAA-679 / EGD-e).